We begin with the raw amino-acid sequence, 294 residues long: Ribosomal protein L11 methyltransferase (294 aa).

Residues threonine 146, glycine 167, aspartate 189, and asparagine 231 each contribute to the S-adenosyl-L-methionine site.

Belongs to the methyltransferase superfamily. PrmA family.

The protein localises to the cytoplasm. It carries out the reaction L-lysyl-[protein] + 3 S-adenosyl-L-methionine = N(6),N(6),N(6)-trimethyl-L-lysyl-[protein] + 3 S-adenosyl-L-homocysteine + 3 H(+). Its function is as follows. Methylates ribosomal protein L11. This chain is Ribosomal protein L11 methyltransferase, found in Photobacterium profundum (strain SS9).